Consider the following 319-residue polypeptide: Ankyrin repeat domain-containing protein 1 (319 aa).

The stretch at L55–I89 forms a coiled coil. 5 ANK repeats span residues Y152–F181, L185–A214, L218–A247, E251–V280, and A284–R315.

Interacts with TTN/titin. Interacts with YBX1. Expressed in heart, cardiac muscle.

The protein localises to the nucleus. In terms of biological role, may play an important role in endothelial cell activation. May act as a nuclear transcription factor that negatively regulates the expression of cardiac genes. In Rattus norvegicus (Rat), this protein is Ankyrin repeat domain-containing protein 1 (Ankrd1).